Consider the following 667-residue polypeptide: Bifunctional polymyxin resistance protein ArnA (667 aa).

The formyltransferase ArnAFT stretch occupies residues 1 to 304; that stretch reads MKAIVFAYHD…EMGIVTDVRL (304 aa). Catalysis depends on histidine 104, which acts as the Proton donor; for formyltransferase activity. (6R)-10-formyltetrahydrofolate is bound by residues arginine 114 and 136 to 140; that span reads VKKAD. The dehydrogenase ArnADH stretch occupies residues 314–667; the sequence is RRTRVLILGV…TAAPKDELNA (354 aa). NAD(+) contacts are provided by residues aspartate 347 and 368–369; that span reads DI. UDP-alpha-D-glucuronate contacts are provided by residues alanine 393, tyrosine 398, and 432–433; that span reads TS. The active-site Proton acceptor; for decarboxylase activity is glutamate 434. UDP-alpha-D-glucuronate is bound by residues arginine 460, asparagine 492, 526–535, and tyrosine 613; that span reads KLVDGGAQKR. Arginine 619 serves as the catalytic Proton donor; for decarboxylase activity.

The protein in the N-terminal section; belongs to the Fmt family. UDP-L-Ara4N formyltransferase subfamily. In the C-terminal section; belongs to the NAD(P)-dependent epimerase/dehydratase family. UDP-glucuronic acid decarboxylase subfamily. As to quaternary structure, homohexamer, formed by a dimer of trimers.

It catalyses the reaction UDP-alpha-D-glucuronate + NAD(+) = UDP-beta-L-threo-pentopyranos-4-ulose + CO2 + NADH. The enzyme catalyses UDP-4-amino-4-deoxy-beta-L-arabinose + (6R)-10-formyltetrahydrofolate = UDP-4-deoxy-4-formamido-beta-L-arabinose + (6S)-5,6,7,8-tetrahydrofolate + H(+). Its pathway is nucleotide-sugar biosynthesis; UDP-4-deoxy-4-formamido-beta-L-arabinose biosynthesis; UDP-4-deoxy-4-formamido-beta-L-arabinose from UDP-alpha-D-glucuronate: step 1/3. It participates in nucleotide-sugar biosynthesis; UDP-4-deoxy-4-formamido-beta-L-arabinose biosynthesis; UDP-4-deoxy-4-formamido-beta-L-arabinose from UDP-alpha-D-glucuronate: step 3/3. The protein operates within bacterial outer membrane biogenesis; lipopolysaccharide biosynthesis. In terms of biological role, bifunctional enzyme that catalyzes the oxidative decarboxylation of UDP-glucuronic acid (UDP-GlcUA) to UDP-4-keto-arabinose (UDP-Ara4O) and the addition of a formyl group to UDP-4-amino-4-deoxy-L-arabinose (UDP-L-Ara4N) to form UDP-L-4-formamido-arabinose (UDP-L-Ara4FN). The modified arabinose is attached to lipid A and is required for resistance to polymyxin and cationic antimicrobial peptides. This Yersinia pseudotuberculosis serotype O:3 (strain YPIII) protein is Bifunctional polymyxin resistance protein ArnA.